Consider the following 166-residue polypeptide: MAKVESQAGELQEKLIAVNRVSKTVKGGRIMSFTALTVVGDGNGRVGYGYGKAREVPAAIQKAMEQAKRNLNKVELNNGTLHHPVRGVHSGSTVFMKPASQGTGIIAGGAMRAVLEVAGIHNVLAKTYGSTNPINVVRATVDALVQGQSPAQIAAKRGLRVEEILG.

The region spanning 11-74 (LQEKLIAVNR…EQAKRNLNKV (64 aa)) is the S5 DRBM domain.

The protein belongs to the universal ribosomal protein uS5 family. As to quaternary structure, part of the 30S ribosomal subunit. Contacts proteins S4 and S8.

In terms of biological role, with S4 and S12 plays an important role in translational accuracy. Located at the back of the 30S subunit body where it stabilizes the conformation of the head with respect to the body. The chain is Small ribosomal subunit protein uS5 from Aeromonas hydrophila subsp. hydrophila (strain ATCC 7966 / DSM 30187 / BCRC 13018 / CCUG 14551 / JCM 1027 / KCTC 2358 / NCIMB 9240 / NCTC 8049).